The primary structure comprises 254 residues: 14-3-3 protein 2 (254 aa).

The protein belongs to the 14-3-3 family. Homodimer.

This is 14-3-3 protein 2 (TFT2) from Solanum lycopersicum (Tomato).